The sequence spans 540 residues: Chaperonin GroEL (540 aa).

ATP is bound by residues 29–32, 86–90, G413, 476–478, and D492; these read TIGP, DGTTT, and NAA.

This sequence belongs to the chaperonin (HSP60) family. In terms of assembly, forms a cylinder of 14 subunits composed of two heptameric rings stacked back-to-back. Interacts with the co-chaperonin GroES.

The protein resides in the cytoplasm. The enzyme catalyses ATP + H2O + a folded polypeptide = ADP + phosphate + an unfolded polypeptide.. Together with its co-chaperonin GroES, plays an essential role in assisting protein folding. The GroEL-GroES system forms a nano-cage that allows encapsulation of the non-native substrate proteins and provides a physical environment optimized to promote and accelerate protein folding. The sequence is that of Chaperonin GroEL from Staphylococcus saprophyticus subsp. saprophyticus (strain ATCC 15305 / DSM 20229 / NCIMB 8711 / NCTC 7292 / S-41).